The chain runs to 337 residues: Cytoskeleton protein RodZ (337 aa).

Residues 1-111 (MNTEATHDQN…LGKRRKKRDG (111 aa)) lie on the Cytoplasmic side of the membrane. The HTH cro/C1-type domain occupies 19–71 (LRNAREQLGLSQQAVAERLCLKVSTVRDIEEDKAPADLASTFLRGYIRSYARL). Residues 30–49 (QQAVAERLCLKVSTVRDIEE) constitute a DNA-binding region (H-T-H motif). A helical; Signal-anchor for type II membrane protein membrane pass occupies residues 112 to 132 (WLMTFTWLVLFVVVGLTGAWW). Topologically, residues 133–337 (WQNHKAQQEE…TLNAEQSPAQ (205 aa)) are periplasmic. Residues 155–220 (NAGGDSAQSV…QNAVVAPSQA (66 aa)) are disordered. The span at 160–192 (SAQSVPLDTSEAASQDSTPAPTAPVDSTATNAV) shows a compositional bias: polar residues. Low complexity predominate over residues 193–217 (PQTPDASATTTAPAADAQQNAVVAP).

It belongs to the RodZ family.

It localises to the cell inner membrane. Cytoskeletal protein that is involved in cell-shape control through regulation of the length of the long axis. The sequence is that of Cytoskeleton protein RodZ from Citrobacter koseri (strain ATCC BAA-895 / CDC 4225-83 / SGSC4696).